The primary structure comprises 469 residues: 3-isopropylmalate dehydratase large subunit (469 aa).

3 residues coordinate [4Fe-4S] cluster: C348, C409, and C412.

The protein belongs to the aconitase/IPM isomerase family. LeuC type 1 subfamily. Heterodimer of LeuC and LeuD. It depends on [4Fe-4S] cluster as a cofactor.

The catalysed reaction is (2R,3S)-3-isopropylmalate = (2S)-2-isopropylmalate. It participates in amino-acid biosynthesis; L-leucine biosynthesis; L-leucine from 3-methyl-2-oxobutanoate: step 2/4. Its function is as follows. Catalyzes the isomerization between 2-isopropylmalate and 3-isopropylmalate, via the formation of 2-isopropylmaleate. This is 3-isopropylmalate dehydratase large subunit from Nitrosococcus oceani (strain ATCC 19707 / BCRC 17464 / JCM 30415 / NCIMB 11848 / C-107).